A 243-amino-acid polypeptide reads, in one-letter code: Ubiquinone/menaquinone biosynthesis C-methyltransferase UbiE (243 aa).

Residues Thr-69, Asp-90, and 116–117 (DA) each bind S-adenosyl-L-methionine.

This sequence belongs to the class I-like SAM-binding methyltransferase superfamily. MenG/UbiE family.

It carries out the reaction a 2-demethylmenaquinol + S-adenosyl-L-methionine = a menaquinol + S-adenosyl-L-homocysteine + H(+). The enzyme catalyses a 2-methoxy-6-(all-trans-polyprenyl)benzene-1,4-diol + S-adenosyl-L-methionine = a 5-methoxy-2-methyl-3-(all-trans-polyprenyl)benzene-1,4-diol + S-adenosyl-L-homocysteine + H(+). It functions in the pathway quinol/quinone metabolism; menaquinone biosynthesis; menaquinol from 1,4-dihydroxy-2-naphthoate: step 2/2. It participates in cofactor biosynthesis; ubiquinone biosynthesis. Methyltransferase required for the conversion of demethylmenaquinol (DMKH2) to menaquinol (MKH2) and the conversion of 2-polyprenyl-6-methoxy-1,4-benzoquinol (DDMQH2) to 2-polyprenyl-3-methyl-6-methoxy-1,4-benzoquinol (DMQH2). This is Ubiquinone/menaquinone biosynthesis C-methyltransferase UbiE from Burkholderia multivorans (strain ATCC 17616 / 249).